The chain runs to 161 residues: tRNA-acetylating toxin 1 (161 aa).

Residues Leu92, Val94, His99, Gly100, Gly102, Gly104, Ala105, Leu132, and Glu135 each contribute to the acetyl-CoA site. The active site involves Tyr140. Acetyl-CoA is bound at residue His142.

The protein belongs to the acetyltransferase family. GNAT subfamily. Homodimer (in absence of antitoxin). Forms a complex with cognate antitoxin TacA1. Forms a 4:2 antitoxin:toxin complex with cognate antitoxin TacA1.

The catalysed reaction is glycyl-tRNA(Gly) + acetyl-CoA = N-acetylglycyl-tRNA(Gly) + CoA + H(+). Its function is as follows. Toxic component of a type II toxin-antitoxin (TA) system. Acetylates tRNA and inhibits translation, does not acetylate uncharged tRNA. Upon expression in situ acetylates only Gly-tRNA(Gly). In vitro acetylates mainly Gly and Ile/Leu. Upon induction of the toxin gene in lag phase in rich medium (but not mid-exponential phase) the lag phase is extended by several hours, locking bacteria in a non-growth state. Neutralized only by cognate antitoxin TacA1 (A8), but not by TacA2 or TacA3. Its toxic effect is neutralized by expression of peptidyl-tRNA hydrolase (pth) in lag phase. NAD-dependent protein deacylase (cobB) also play a role in detoxifying TacT targets. Expression increases persister cell formation, which is also abolished by either cognate antitoxin or Pth expression. Plays a role in persister cell formation. Functionally, the TacA1-TacT1 complex binds (and probably represses) its own promoter DNA but not that of tacA3-tacT3, it does not repress the tacA3-tacT3 promoter. The chain is tRNA-acetylating toxin 1 from Salmonella typhimurium (strain 14028s / SGSC 2262).